Consider the following 210-residue polypeptide: Peptidyl-tRNA hydrolase (210 aa).

Y14 contacts tRNA. H19 serves as the catalytic Proton acceptor. The tRNA site is built by F64, N66, and N112.

This sequence belongs to the PTH family. Monomer.

It is found in the cytoplasm. The catalysed reaction is an N-acyl-L-alpha-aminoacyl-tRNA + H2O = an N-acyl-L-amino acid + a tRNA + H(+). In terms of biological role, hydrolyzes ribosome-free peptidyl-tRNAs (with 1 or more amino acids incorporated), which drop off the ribosome during protein synthesis, or as a result of ribosome stalling. Its function is as follows. Catalyzes the release of premature peptidyl moieties from peptidyl-tRNA molecules trapped in stalled 50S ribosomal subunits, and thus maintains levels of free tRNAs and 50S ribosomes. This is Peptidyl-tRNA hydrolase from Methylorubrum populi (strain ATCC BAA-705 / NCIMB 13946 / BJ001) (Methylobacterium populi).